A 424-amino-acid polypeptide reads, in one-letter code: DNA repair protein Rad60 (424 aa).

Tyrosine 26 carries the phosphotyrosine modification. A phosphoserine mark is found at serine 32 and serine 34. A disordered region spans residues 45 to 177 (LPKKSTKTGK…LTTTTSNSAS (133 aa)). Residues 48–57 (KSTKTGKRKN) show a composition bias toward basic residues. Over residues 77–93 (QAEHKAVEPEEDMRTER) the composition is skewed to basic and acidic residues. At serine 96 the chain carries Phosphoserine. A compositionally biased stretch (basic and acidic residues) spans 104–123 (EMEKKNGQQSDVEKHAKEND). Basic residues predominate over residues 156–166 (KPKKRGQKKRT). Over residues 167–177 (SLTTTTSNSAS) the composition is skewed to low complexity.

Forms a complex with dgrn; likely required for localization to the nuclear periphery. Interacts with the SMC5-SMC6 complex members SMC5 and SMC6/jnj following ionizing radiation (IR) to induce DNA damage. Interaction between the SMC5-SMC6 complex and the dgrn-Rad60 complex, may stabilize the association of heterochromatic DSBs with the nuclear periphery.

It localises to the nucleus. Its subcellular location is the nucleoplasm. In terms of biological role, required for repair of DNA double strand breaks which occur during replication or are induced by ionizing radiation (IR). Functions with dgrn and downstream of the SMC5-SMC6 complex to regulate strand break repair. Likely functions by stabilizing the association of heterochromatic double strand breaks (DSBs) with the nuclear periphery as part of the homologous recombination (HR) repair process. The chain is DNA repair protein Rad60 from Drosophila melanogaster (Fruit fly).